The following is a 334-amino-acid chain: Phosphate acyltransferase (334 aa).

This sequence belongs to the PlsX family. As to quaternary structure, homodimer. Probably interacts with PlsY.

It localises to the cytoplasm. The catalysed reaction is a fatty acyl-[ACP] + phosphate = an acyl phosphate + holo-[ACP]. Its pathway is lipid metabolism; phospholipid metabolism. Catalyzes the reversible formation of acyl-phosphate (acyl-PO(4)) from acyl-[acyl-carrier-protein] (acyl-ACP). This enzyme utilizes acyl-ACP as fatty acyl donor, but not acyl-CoA. This Mycoplasmopsis agalactiae (strain NCTC 10123 / CIP 59.7 / PG2) (Mycoplasma agalactiae) protein is Phosphate acyltransferase.